Reading from the N-terminus, the 609-residue chain is UvrABC system protein C (609 aa).

Residues 15–92 (TGSGVYQMQD…IKQFRPRYNV (78 aa)) enclose the GIY-YIG domain. One can recognise a UVR domain in the interval 202-237 (DQVIIKLTERMEVASENLVFEEAAHYRDQIRQLRRL).

Belongs to the UvrC family. Interacts with UvrB in an incision complex.

It localises to the cytoplasm. Functionally, the UvrABC repair system catalyzes the recognition and processing of DNA lesions. UvrC both incises the 5' and 3' sides of the lesion. The N-terminal half is responsible for the 3' incision and the C-terminal half is responsible for the 5' incision. The protein is UvrABC system protein C of Coxiella burnetii (strain RSA 331 / Henzerling II).